The chain runs to 164 residues: ATP synthase subunit b (164 aa).

A helical transmembrane segment spans residues 4–24; that stretch reads IHFDLTLVVQVLSFLLLVYIL.

It belongs to the ATPase B chain family. F-type ATPases have 2 components, F(1) - the catalytic core - and F(0) - the membrane proton channel. F(1) has five subunits: alpha(3), beta(3), gamma(1), delta(1), epsilon(1). F(0) has three main subunits: a(1), b(2) and c(10-14). The alpha and beta chains form an alternating ring which encloses part of the gamma chain. F(1) is attached to F(0) by a central stalk formed by the gamma and epsilon chains, while a peripheral stalk is formed by the delta and b chains.

The protein resides in the cell membrane. Its function is as follows. F(1)F(0) ATP synthase produces ATP from ADP in the presence of a proton or sodium gradient. F-type ATPases consist of two structural domains, F(1) containing the extramembraneous catalytic core and F(0) containing the membrane proton channel, linked together by a central stalk and a peripheral stalk. During catalysis, ATP synthesis in the catalytic domain of F(1) is coupled via a rotary mechanism of the central stalk subunits to proton translocation. In terms of biological role, component of the F(0) channel, it forms part of the peripheral stalk, linking F(1) to F(0). The sequence is that of ATP synthase subunit b from Desulfitobacterium hafniense (strain Y51).